A 144-amino-acid polypeptide reads, in one-letter code: Ethylene-responsive transcription factor ERF019 (144 aa).

A DNA-binding region (AP2/ERF) is located at residues 13–72 (KYKGIRRRKWGKWVSEIRVPGTRDRLWLGSFSTAEGAAVAHDVAFFCLHQPDSLESLNFP).

The protein belongs to the AP2/ERF transcription factor family. ERF subfamily.

The protein localises to the nucleus. Its function is as follows. Probably acts as a transcriptional activator. Binds to the GCC-box pathogenesis-related promoter element. May be involved in the regulation of gene expression by stress factors and by components of stress signal transduction pathways. The sequence is that of Ethylene-responsive transcription factor ERF019 (ERF019) from Arabidopsis thaliana (Mouse-ear cress).